Reading from the N-terminus, the 231-residue chain is Orotidine 5'-phosphate decarboxylase (231 aa).

Substrate is bound by residues aspartate 11, lysine 33, 60–69, threonine 120, arginine 181, glutamine 190, glycine 210, and arginine 211; that span reads DLKFHDIPNT. The Proton donor role is filled by lysine 62.

Belongs to the OMP decarboxylase family. Type 1 subfamily. In terms of assembly, homodimer.

It catalyses the reaction orotidine 5'-phosphate + H(+) = UMP + CO2. Its pathway is pyrimidine metabolism; UMP biosynthesis via de novo pathway; UMP from orotate: step 2/2. Functionally, catalyzes the decarboxylation of orotidine 5'-monophosphate (OMP) to uridine 5'-monophosphate (UMP). This Pseudoalteromonas atlantica (strain T6c / ATCC BAA-1087) protein is Orotidine 5'-phosphate decarboxylase.